A 256-amino-acid polypeptide reads, in one-letter code: Fructose-1,6-bisphosphatase/inositol-1-monophosphatase (256 aa).

Mg(2+) contacts are provided by glutamate 67, aspartate 83, leucine 85, and aspartate 86. Substrate is bound by residues 86 to 88 (DGS), arginine 170, isoleucine 175, and arginine 194. Residue aspartate 201 coordinates Mg(2+).

This sequence belongs to the inositol monophosphatase superfamily. FBPase class 4 family. Homodimer. The cofactor is Mg(2+).

The catalysed reaction is beta-D-fructose 1,6-bisphosphate + H2O = beta-D-fructose 6-phosphate + phosphate. It catalyses the reaction a myo-inositol phosphate + H2O = myo-inositol + phosphate. Phosphatase with broad specificity; it can dephosphorylate fructose 1,6-bisphosphate (FBP) and inositol-1-phosphate (IMP). However, while possessing a high FBPase activity in vitro, does not participate in gluconeogenesis in vivo. The protein is Fructose-1,6-bisphosphatase/inositol-1-monophosphatase (suhB) of Thermococcus kodakarensis (strain ATCC BAA-918 / JCM 12380 / KOD1) (Pyrococcus kodakaraensis (strain KOD1)).